A 447-amino-acid chain; its full sequence is Argininosuccinate synthase (447 aa).

Residues 17–25 (AFSGGLDTS) and alanine 43 contribute to the ATP site. Residue tyrosine 99 participates in L-citrulline binding. The ATP site is built by glycine 129 and threonine 131. 3 residues coordinate L-aspartate: threonine 131, asparagine 135, and aspartate 136. Residue asparagine 135 coordinates L-citrulline. Aspartate 136 contributes to the ATP binding site. L-citrulline is bound by residues arginine 139 and serine 192. Aspartate 194 is an ATP binding site. Residues threonine 201, glutamate 203, and glutamate 280 each coordinate L-citrulline.

This sequence belongs to the argininosuccinate synthase family. Type 2 subfamily. As to quaternary structure, homotetramer.

The protein localises to the cytoplasm. The enzyme catalyses L-citrulline + L-aspartate + ATP = 2-(N(omega)-L-arginino)succinate + AMP + diphosphate + H(+). The protein operates within amino-acid biosynthesis; L-arginine biosynthesis; L-arginine from L-ornithine and carbamoyl phosphate: step 2/3. The chain is Argininosuccinate synthase from Klebsiella pneumoniae subsp. pneumoniae (strain ATCC 700721 / MGH 78578).